We begin with the raw amino-acid sequence, 476 residues long: Monofunctional riboflavin biosynthesis protein RIBA 2, chloroplastic (476 aa).

A chloroplast-targeting transit peptide spans 1 to 54 (MASLTLRCDSTHLLPSRDVVKGTKPFGTSLVYPRIISKKFNVRMRVIPEEGDVF). Positions 44–306 (MRVIPEEGDV…IADLIRYRRK (263 aa)) are DHBP synthase. Residues 130–131 (RE), Asp-135, 245–249 (RAGHT), and Glu-269 each bind D-ribulose 5-phosphate. Glu-131 contacts Mg(2+). His-248 serves as a coordination point for Mg(2+). The interval 307–476 (RERLVEFTAV…SGKVPLITTP (170 aa)) is inactive GTP cyclohydrolase II. GTP contacts are provided by residues 357–361 (RVHAE), Gln-376, 399–401 (ESK), and Thr-450.

The protein in the N-terminal section; belongs to the DHBP synthase family. It in the C-terminal section; belongs to the GTP cyclohydrolase II family. Mg(2+) serves as cofactor. It depends on Mn(2+) as a cofactor. In terms of tissue distribution, expressed in leaves, shoots, roots, flowers and siliques.

It localises to the plastid. The protein resides in the chloroplast. It catalyses the reaction D-ribulose 5-phosphate = (2S)-2-hydroxy-3-oxobutyl phosphate + formate + H(+). It participates in cofactor biosynthesis; riboflavin biosynthesis; 2-hydroxy-3-oxobutyl phosphate from D-ribulose 5-phosphate: step 1/1. Its function is as follows. Involved in riboflavin biosynthesis. Catalyzes the conversion of D-ribulose 5-phosphate to formate and 3,4-dihydroxy-2-butanone 4-phosphate. RIBA2 and RIBA3 together are not able to complement the loss of function of RIBA1. The polypeptide is Monofunctional riboflavin biosynthesis protein RIBA 2, chloroplastic (RIBA2) (Arabidopsis thaliana (Mouse-ear cress)).